A 66-amino-acid chain; its full sequence is Large ribosomal subunit protein bL31 (66 aa).

Positions 16, 18, 36, and 39 each coordinate Zn(2+).

It belongs to the bacterial ribosomal protein bL31 family. Type A subfamily. As to quaternary structure, part of the 50S ribosomal subunit. Zn(2+) is required as a cofactor.

Functionally, binds the 23S rRNA. In Geobacter metallireducens (strain ATCC 53774 / DSM 7210 / GS-15), this protein is Large ribosomal subunit protein bL31.